Here is a 144-residue protein sequence, read N- to C-terminus: Large ribosomal subunit protein uL15 (144 aa).

The tract at residues Met1 to Gln54 is disordered. A compositionally biased stretch (gly residues) spans Arg21–Gly31.

The protein belongs to the universal ribosomal protein uL15 family. As to quaternary structure, part of the 50S ribosomal subunit.

Its function is as follows. Binds to the 23S rRNA. The chain is Large ribosomal subunit protein uL15 from Methylobacillus flagellatus (strain ATCC 51484 / DSM 6875 / VKM B-1610 / KT).